The chain runs to 285 residues: Golgi to ER traffic protein 2 (285 aa).

A compositionally biased stretch (basic and acidic residues) spans 1–10 (MSELTEAEKR). 2 disordered regions span residues 1–72 (MSEL…KEDS) and 87–106 (MQGQ…PDLL). Serine 2 is subject to N-acetylserine. Over 2–148 (SELTEAEKRR…LDYHDYLLNR (147 aa)) the chain is Cytoplasmic. The segment covering 11-20 (RLLRERRQKK) has biased composition (basic residues). Polar residues predominate over residues 24–42 (GGASSRLNKITGQASSHLN). At serine 45 the chain carries Phosphoserine. Positions 49–60 (APSAAKTTPPAS) are enriched in low complexity. Residues 93–104 (GKSTPQDSSTPD) are compositionally biased toward polar residues. Residues 149–169 (LKAWTILVKWVFFLLPYLYLI) form a helical membrane-spanning segment. Residues 170-196 (TRPNSSVWPAYAFTQSAWFAPLRNPSN) are Lumenal-facing. N-linked (GlcNAc...) asparagine glycans are attached at residues asparagine 173 and asparagine 196. The helical transmembrane segment at 197–216 (FTRIFATFEFLSISIYYQLL) threads the bilayer. The Cytoplasmic portion of the chain corresponds to 217-263 (KNVEHKSKIKNLQDTNKLVKLVSLVPEGVIPVANLKGKLITLLQYWD). A helical membrane pass occupies residues 264-284 (LLSMLITDISFVLIVLGLLTY). Residue leucine 285 is a topological domain, lumenal.

It belongs to the GET2 family. As to quaternary structure, component of the Golgi to ER traffic (GET) complex, which is composed of GET1, GET2 and GET3. Within the complex, GET1 and GET2 form a heterotetramer which is stabilized by phosphatidylinositol binding and which binds to the GET3 homodimer.

Its subcellular location is the endoplasmic reticulum membrane. It is found in the golgi apparatus membrane. Its function is as follows. Required for the post-translational delivery of tail-anchored (TA) proteins to the endoplasmic reticulum. Together with GET1, acts as a membrane receptor for soluble GET3, which recognizes and selectively binds the transmembrane domain of TA proteins in the cytosol. The GET complex cooperates with the HDEL receptor ERD2 to mediate the ATP-dependent retrieval of resident ER proteins that contain a C-terminal H-D-E-L retention signal from the Golgi to the ER. Involved in DNA replication and DNA damage response and also in cell wall function. This chain is Golgi to ER traffic protein 2, found in Saccharomyces cerevisiae (strain RM11-1a) (Baker's yeast).